A 549-amino-acid polypeptide reads, in one-letter code: YTH domain-containing family protein 1 (549 aa).

Disordered stretches follow at residues 29–102 (QAPW…QPNM), 139–165 (GHPP…RQSG), 243–262 (GASG…QQAV), 273–298 (DSTE…AKGP), and 425–458 (REDS…SENK). Polar residues predominate over residues 49–61 (VVGQTQSSPQYNG). The span at 71–102 (QGYYMPQQQQQQQQMPQYYGGPMSPSQPQPNM) shows a compositional bias: low complexity. Polar residues-rich tracts occupy residues 251 to 260 (TGPSATTPQQ) and 273 to 289 (DSTE…TPTA). Residues 307 to 513 (DRFFVLKSLT…SVGRRLIGLF (207 aa)) form the YTH domain.

Belongs to the YTHDF family. YTHDF1 subfamily.

In terms of biological role, specifically recognizes and binds N6-methyladenosine (m6A)-containing mRNAs, and regulates their stability. M6A is a modification present at internal sites of mRNAs and some non-coding RNAs and plays a role in mRNA stability and processing. Directly interacts with the acid phosphatase APHA mRNA to increase its stability. The protein is YTH domain-containing family protein 1 of Cryphonectria parasitica (strain ATCC 38755 / EP155).